The sequence spans 197 residues: dTTP/UTP pyrophosphatase (197 aa).

Aspartate 70 serves as the catalytic Proton acceptor.

It belongs to the Maf family. YhdE subfamily. The cofactor is a divalent metal cation.

Its subcellular location is the cytoplasm. It carries out the reaction dTTP + H2O = dTMP + diphosphate + H(+). The enzyme catalyses UTP + H2O = UMP + diphosphate + H(+). In terms of biological role, nucleoside triphosphate pyrophosphatase that hydrolyzes dTTP and UTP. May have a dual role in cell division arrest and in preventing the incorporation of modified nucleotides into cellular nucleic acids. The sequence is that of dTTP/UTP pyrophosphatase (yceF2) from Shigella boydii serotype 4 (strain Sb227).